The following is a 259-amino-acid chain: MAKEVSLSNTSAGGAALDILGLWKGFDGTEVLKGLSLNVPAGQFLSIVGRSGCGKSTLLRLIADLETIDGGTIQIDGNPLSEISGEVRMMFQDARLLPWRTVLQNIGIGLPNPWQNRARKALAEVGLSEHADKWPSQLSGGQRQRVALARALIHRPRLLLLDEPLGALDALTRLEMQDLIESIRARHGFTVLLVTHDVEEAIALGDRVIVMEQGEIVLELDIELARLRVRSSQAFTSIEEKVLSRVLNSRNAPSGDDCK.

Residues 17–238 (LDILGLWKGF…VRSSQAFTSI (222 aa)) form the ABC transporter domain. Residue 49–56 (GRSGCGKS) participates in ATP binding.

It belongs to the ABC transporter superfamily. Aliphatic sulfonates importer (TC 3.A.1.17.2) family. In terms of assembly, the complex is composed of two ATP-binding proteins (SsuB), two transmembrane proteins (SsuC) and a solute-binding protein (SsuA).

The protein resides in the cell inner membrane. The catalysed reaction is ATP + H2O + aliphatic sulfonate-[sulfonate-binding protein]Side 1 = ADP + phosphate + aliphatic sulfonateSide 2 + [sulfonate-binding protein]Side 1.. Part of the ABC transporter complex SsuABC involved in aliphatic sulfonates import. Responsible for energy coupling to the transport system. This Agrobacterium fabrum (strain C58 / ATCC 33970) (Agrobacterium tumefaciens (strain C58)) protein is Aliphatic sulfonates import ATP-binding protein SsuB 2.